The following is a 264-amino-acid chain: Virulence plasmid ParA family protein pGP5-D (264 aa).

Position 9–16 (9–16 (FKGGTGKT)) interacts with ATP.

The protein belongs to the ParA family.

Its function is as follows. Required for growth within mammalian cells. The protein is Virulence plasmid ParA family protein pGP5-D of Chlamydia trachomatis.